The sequence spans 382 residues: Homoserine O-acetyltransferase (382 aa).

An AB hydrolase-1 domain is found at 50–360 (NAVLICHALT…DKGHDAFLLD (311 aa)). Ser-155 functions as the Nucleophile in the catalytic mechanism. Arg-225 contacts substrate. Residues Asp-321 and His-354 contribute to the active site. Asp-355 contributes to the substrate binding site.

Belongs to the AB hydrolase superfamily. MetX family. In terms of assembly, homodimer.

It is found in the cytoplasm. The catalysed reaction is L-homoserine + acetyl-CoA = O-acetyl-L-homoserine + CoA. It participates in amino-acid biosynthesis; L-methionine biosynthesis via de novo pathway; O-acetyl-L-homoserine from L-homoserine: step 1/1. In terms of biological role, transfers an acetyl group from acetyl-CoA to L-homoserine, forming acetyl-L-homoserine. The protein is Homoserine O-acetyltransferase of Caulobacter vibrioides (strain ATCC 19089 / CIP 103742 / CB 15) (Caulobacter crescentus).